We begin with the raw amino-acid sequence, 505 residues long: Holliday junction branch migration ATPase PINA (505 aa).

Residues 2 to 106 enclose the PINc domain; that stretch reads NDLMLDKSAL…IVTADETQKK (105 aa). The segment at 434–505 is KH domain; that stretch reads PVNRGITMSN…NIKIKIKLSD (72 aa). The segment at 493–505 is required for maximum interaction with Hjc and Hjm; it reads KKNNIKIKIKLSD.

As to quaternary structure, homohexamer; the central pore (25-31 Angstroms) is large enough to hold dsDNA. In PDB:5F4H two of the 6 subunits are in an ATP-binding competent conformation. Interacts with Holliday junction resolvase Hjc; in the presence of HJ DNA this interaction decreases branch migration but not Y-DNA unwinding. Interacts with helicase Hjm (hel308) which decreases the DNA helicase activity of Hjm. The cofactor is Ca(2+).

It catalyses the reaction ATP + H2O = ADP + phosphate + H(+). Promotes Holliday junction (HJ) branch migration and unwinds Y-shaped DNA (but not replication forks or dsDNA) in an ATP hydrolysis-dependent manner. Stimulates cleavage by HJ resolvase Hjc. Unwinds Y-shaped and 3'-flap DNA substrates. In the absence of other proteins stabilizes replication forks (prevents spontaneous unwinding); Hjc, Hjm (Hel308) and PINA coordinate HJ migration and cleavage of replication forks in a coordinated way. Inhibits the 5'-3' (but not 3'-5') helicase activity of helicase Hjm (Hel308) on overhang DNA. Probably acts as an ATP-dependent pump that pulls DNA through the hexamer. In Saccharolobus islandicus (strain REY15A) (Sulfolobus islandicus), this protein is Holliday junction branch migration ATPase PINA.